We begin with the raw amino-acid sequence, 858 residues long: Heat shock protein 105 kDa (858 aa).

Ser-2 is subject to N-acetylserine. Position 471 is an N6-acetyllysine (Lys-471). Disordered regions lie at residues 500 to 584 and 796 to 858; these read KVPT…PPEA and CEPV…MDLD. Residues 504-514 are compositionally biased toward acidic residues; the sequence is EENEMSSEADM. Phosphoserine is present on residues Ser-509 and Ser-510. A compositionally biased stretch (polar residues) spans 532-554; sequence QQDNSEAGTQPQVQTDAQQTSQS. Ser-557 is subject to Phosphoserine. Thr-561 bears the Phosphothreonine mark. Basic and acidic residues-rich tracts occupy residues 563–584 and 805–814; these read EENKIPDADKANEKKVDQPPEA and PKIESPKLER. Position 809 is a phosphoserine (Ser-809). Thr-815 bears the Phosphothreonine mark. Basic and acidic residues predominate over residues 821–832; the sequence is IDKKEEDLEDKN. The segment covering 849 to 858 has biased composition (polar residues); that stretch reads EKNSVNMDLD.

It belongs to the heat shock protein 70 family. As to quaternary structure, interacts with HSPA8/HSC70. Interacts with HSPA1A (via NBD) and HSPA1B (via NBD). Phosphorylation on Ser-509 may be important for regulation of the HSPA8/HSC70 chaperone activity.

The protein localises to the cytoplasm. In terms of biological role, acts as a nucleotide-exchange factor (NEF) for chaperone proteins HSPA1A and HSPA1B, promoting the release of ADP from HSPA1A/B thereby triggering substrate release. Prevents the aggregation of denatured proteins in cells under severe stress, on which the ATP levels decrease markedly. Inhibits HSPA8/HSC70 ATPase and chaperone activities. This is Heat shock protein 105 kDa (HSPH1) from Pongo abelii (Sumatran orangutan).